We begin with the raw amino-acid sequence, 363 residues long: Spermidine/putrescine import ATP-binding protein PotA (363 aa).

Residues V6 to I236 form the ABC transporter domain. G38–T45 provides a ligand contact to ATP.

It belongs to the ABC transporter superfamily. Spermidine/putrescine importer (TC 3.A.1.11.1) family. As to quaternary structure, the complex is composed of two ATP-binding proteins (PotA), two transmembrane proteins (PotB and PotC) and a solute-binding protein (PotD).

It localises to the cell membrane. It catalyses the reaction ATP + H2O + polyamine-[polyamine-binding protein]Side 1 = ADP + phosphate + polyamineSide 2 + [polyamine-binding protein]Side 1.. In terms of biological role, part of the ABC transporter complex PotABCD involved in spermidine/putrescine import. Responsible for energy coupling to the transport system. The polypeptide is Spermidine/putrescine import ATP-binding protein PotA (Latilactobacillus sakei subsp. sakei (strain 23K) (Lactobacillus sakei subsp. sakei)).